The sequence spans 248 residues: DNA repair protein RecO (248 aa).

This sequence belongs to the RecO family.

Involved in DNA repair and RecF pathway recombination. The protein is DNA repair protein RecO of Oleidesulfovibrio alaskensis (strain ATCC BAA-1058 / DSM 17464 / G20) (Desulfovibrio alaskensis).